We begin with the raw amino-acid sequence, 421 residues long: Gamma-glutamyl phosphate reductase (421 aa).

It belongs to the gamma-glutamyl phosphate reductase family.

The protein localises to the cytoplasm. It carries out the reaction L-glutamate 5-semialdehyde + phosphate + NADP(+) = L-glutamyl 5-phosphate + NADPH + H(+). It functions in the pathway amino-acid biosynthesis; L-proline biosynthesis; L-glutamate 5-semialdehyde from L-glutamate: step 2/2. Its function is as follows. Catalyzes the NADPH-dependent reduction of L-glutamate 5-phosphate into L-glutamate 5-semialdehyde and phosphate. The product spontaneously undergoes cyclization to form 1-pyrroline-5-carboxylate. This Pseudomonas paraeruginosa (strain DSM 24068 / PA7) (Pseudomonas aeruginosa (strain PA7)) protein is Gamma-glutamyl phosphate reductase.